Reading from the N-terminus, the 122-residue chain is Acidic phospholipase A2 Tpu-E6c (122 aa).

Cystine bridges form between Cys26-Cys115, Cys28-Cys44, Cys43-Cys95, Cys49-Cys122, Cys50-Cys88, Cys57-Cys81, and Cys75-Cys86. Residues Tyr27, Gly29, and Gly31 each contribute to the Ca(2+) site. His47 is an active-site residue. Residue Asp48 participates in Ca(2+) binding. The active site involves Asp89.

Monomer. Ca(2+) serves as cofactor. Expressed by the venom gland.

It localises to the secreted. The enzyme catalyses a 1,2-diacyl-sn-glycero-3-phosphocholine + H2O = a 1-acyl-sn-glycero-3-phosphocholine + a fatty acid + H(+). In terms of biological role, snake venom phospholipase A2 (PLA2) that impairs hemostasis. It weakly inhibits ADP-induced platelet aggregation when tested on platelet rich plasma from human and rabbit blood (15-25% of inhibition at 5-10 ug of enzyme), and dose-dependently inhibits blood coagulation, possibly by inhibiting thrombin activation. Exhibits high hydrolytic activities toward L-dipalmitoyl phosphatidylcholine. PLA2 catalyzes the calcium-dependent hydrolysis of the 2-acyl groups in 3-sn-phosphoglycerides. The chain is Acidic phospholipase A2 Tpu-E6c from Craspedocephalus puniceus (Flat-nosed pitviper).